A 490-amino-acid chain; its full sequence is Zinc finger protein STP4 (490 aa).

Composition is skewed to low complexity over residues 1–16 (MLVS…SVMS) and 52–73 (PSLP…STLN). Residues 1-85 (MLVSSSFASS…PPPPLTTSYS (85 aa)) are disordered. Phosphoserine is present on residues serine 153 and serine 155. The segment covering 231 to 247 (QQQQQLNSSSSASALPS) has biased composition (low complexity). Residues 231–273 (QQQQQLNSSSSASALPSIHSPLTNEHTSRYSSSLKDSAKITKQ) are disordered. Residues 250–265 (SPLTNEHTSRYSSSLK) are compositionally biased toward polar residues. A C2H2-type zinc finger spans residues 304–326 (HKCPICQRGFARNNDLIRHKKRH). The disordered stretch occupies residues 338–375 (ESDNNSGADDQDDTARTSANNDSDDSNDKLAASSSSEE).

The protein localises to the cytoplasm. It localises to the mitochondrion. It is found in the nucleus. The sequence is that of Zinc finger protein STP4 (STP4) from Saccharomyces cerevisiae (strain ATCC 204508 / S288c) (Baker's yeast).